The chain runs to 798 residues: Metabotropic glutamate receptor-like protein A (798 aa).

An N-terminal signal peptide occupies residues 1-23 (MNKLKFLIILFITFLFNLKYINS). Topologically, residues 24 to 388 (LKQCKISVLL…DYSNSMKLGL (365 aa)) are extracellular. N186, N275, and N320 each carry an N-linked (GlcNAc...) asparagine glycan. Residues 389-409 (TIVSGFCILFCIISMVLVIMF) form a helical membrane-spanning segment. Residues 410-419 (RHAKIIKSAS) lie on the Cytoplasmic side of the membrane. The chain crosses the membrane as a helical span at residues 420–440 (PIFCLLILFGCIIIFSGCIIF). Residues 441–447 (SLSPTDG) are Extracellular-facing. A helical transmembrane segment spans residues 448–468 (ICGARVWLLSIGYTIFLGSLL). Residues 469 to 494 (VKNWRIWLLFDNPKLKKRSITNWKLY) lie on the Cytoplasmic side of the membrane. Residues 495–515 (PFVAGILAADVLILALWQGLG) traverse the membrane as a helical segment. At 516 to 545 (DIRSESRIGIDSLTKYQYANVCSSNDQGSV) the chain is on the extracellular side. The chain crosses the membrane as a helical span at residues 546-566 (ALYILLVFHGIKLLAACFISF). The Cytoplasmic segment spans residues 567 to 580 (KIKAVDIEEFNESK). The helical transmembrane segment at 581-601 (PIASSIYIITFCLFIVIPLMV) threads the bilayer. At 602–609 (SPQSVASQ) the chain is on the extracellular side. A helical membrane pass occupies residues 610–630 (VITIVVCAIVTTLISISLLFG). At 631–798 (SKFYMMATQG…NQSEIDPDDV (168 aa)) the chain is on the cytoplasmic side. Positions 714 to 771 (AEQDSKLDLENQNDENEIENNQNNQNNIVEDCQKVEKLEKDENLEKDENLEKDENLEK) form a coiled coil. A compositionally biased stretch (basic and acidic residues) spans 752 to 774 (EKDENLEKDENLEKDENLEKDNE). The tract at residues 752-798 (EKDENLEKDENLEKDENLEKDNENQSIIQKKRLSKNFNQSEIDPDDV) is disordered.

This sequence in the N-terminal section; belongs to the BMP lipoprotein family. In the C-terminal section; belongs to the G-protein coupled receptor 3 family. GABA-B receptor subfamily.

The protein localises to the membrane. Its subcellular location is the cytoplasm. It is found in the cell cortex. The protein resides in the perinuclear region. Its function is as follows. May play an important role in the terminal differentiation. The chain is Metabotropic glutamate receptor-like protein A (grlA) from Dictyostelium discoideum (Social amoeba).